Here is a 79-residue protein sequence, read N- to C-terminus: Beta-hexatoxin-Mg1a (79 aa).

Residues 1-20 (MKAPATTLILVMSLISVLWA) form the signal peptide. Positions 21–50 (TPDLEEGDLLAELGDLIATDDEYPMKPEER) are excised as a propeptide. Cystine bridges form between C52-C66, C59-C71, and C65-C76.

Belongs to the neurotoxin 15 family. 01 (magi-5) subfamily. As to expression, expressed by the venom gland.

Its subcellular location is the secreted. Its function is as follows. Insect and vertebrate active toxin. Binds to site 4 of mammalian voltage-gated sodium channels and shifts the activation voltage of the mammalian Nav1.2a/SCN2A channel to more hyperpolarized voltages, whereas the insect channel, DmNav1 (para), is not affected. Competes for binding at site 3 of the insect sodium channel. Causes temporary paralysis when injected into lepidopteran larvae at 8.6 nmol/g. A low intracranial injection dose into mice causes lacrimation, closure of the eyes and sweating. A high injection dose causes extensive lacrimation and death. This Macrothele gigas (Japanese funnel web spider) protein is Beta-hexatoxin-Mg1a.